We begin with the raw amino-acid sequence, 407 residues long: Putative glucose/galactose transporter (407 aa).

12 helical membrane-spanning segments follow: residues 11–31 (GSLTALFFLMGFITVLNDILI), 47–67 (LIQFCFFGAYFIMGGVFGNVI), 70–90 (IGYPFGVVLGFVITASGCALF), 96–116 (FGSYGFFLGALFILASGIVCL), 139–159 (VQAFNSLGTTLGPIFGSLLIF), 180–200 (VQMPYLGLAVFSLLLALVMYL), 225–245 (FVFGALGIFFYVGGEVAIGSF), 263–283 (HYLVYYWGGAMVGRFLGSALM), 300–320 (IILIALAILIGGKIALFALTF), 321–341 (VGFFNSIMFPTIFSLATLNLG), 349–369 (GVISMAIVGGALIPPIQGVVT), and 378–398 (NLLYAYSVPLLCYFYILFFAL).

This sequence belongs to the major facilitator superfamily. FHS transporter (TC 2.A.1.7) family.

It localises to the cell inner membrane. In terms of biological role, intake of glucose and galactose. The chain is Putative glucose/galactose transporter (gluP) from Helicobacter pylori (strain J99 / ATCC 700824) (Campylobacter pylori J99).